The sequence spans 59 residues: UPF0434 protein SO_2800 (59 aa).

This sequence belongs to the UPF0434 family.

The polypeptide is UPF0434 protein SO_2800 (Shewanella oneidensis (strain ATCC 700550 / JCM 31522 / CIP 106686 / LMG 19005 / NCIMB 14063 / MR-1)).